Consider the following 198-residue polypeptide: Ribonuclease HII (198 aa).

The RNase H type-2 domain occupies Gln10–Ser198. The a divalent metal cation site is built by Asp16, Glu17, and Asp108.

It belongs to the RNase HII family. The cofactor is Mn(2+). Mg(2+) serves as cofactor.

It localises to the cytoplasm. The enzyme catalyses Endonucleolytic cleavage to 5'-phosphomonoester.. Functionally, endonuclease that specifically degrades the RNA of RNA-DNA hybrids. The polypeptide is Ribonuclease HII (Shigella dysenteriae serotype 1 (strain Sd197)).